We begin with the raw amino-acid sequence, 528 residues long: Peptide chain release factor 3 (528 aa).

One can recognise a tr-type G domain in the interval 11 to 279; it reads EKRRTFAIIS…GLVEWAPKPL (269 aa). GTP-binding positions include 20–27, 88–92, and 142–145; these read SHPDAGKT, DTPGH, and NKCD.

This sequence belongs to the TRAFAC class translation factor GTPase superfamily. Classic translation factor GTPase family. PrfC subfamily.

The protein localises to the cytoplasm. Increases the formation of ribosomal termination complexes and stimulates activities of RF-1 and RF-2. It binds guanine nucleotides and has strong preference for UGA stop codons. It may interact directly with the ribosome. The stimulation of RF-1 and RF-2 is significantly reduced by GTP and GDP, but not by GMP. The polypeptide is Peptide chain release factor 3 (Psychromonas ingrahamii (strain DSM 17664 / CCUG 51855 / 37)).